A 247-amino-acid polypeptide reads, in one-letter code: MNVLSCSINTLNGLYDLSGVEVGQHFYWKIGGFQVHGQVLITSWVVIAILLGSATLAVRNPQTIPTGGQNFFEYVLEFIRDVSKTQIGEEYGPWVPFIGTMFLFIFVSNWSGALLPWKIIQLPHGELAAPTNDINTTVALALLTSVAYFYAGLTKKGLGYFGKYIQPTPILLPINILEDFTKPLSLSFRLFGKILADELVVVVLVSLVPSVVPIPVMFLGLFTSGIQALIFATLAAAYIGESMEGHH.

The next 5 helical transmembrane spans lie at 38-58 (QVLI…TLAV), 95-115 (VPFI…GALL), 134-154 (INTT…AGLT), 199-219 (LVVV…VMFL), and 220-240 (GLFT…AYIG).

This sequence belongs to the ATPase A chain family. As to quaternary structure, F-type ATPases have 2 components, CF(1) - the catalytic core - and CF(0) - the membrane proton channel. CF(1) has five subunits: alpha(3), beta(3), gamma(1), delta(1), epsilon(1). CF(0) has four main subunits: a, b, b' and c.

The protein localises to the plastid. It is found in the chloroplast thylakoid membrane. In terms of biological role, key component of the proton channel; it plays a direct role in the translocation of protons across the membrane. The polypeptide is ATP synthase subunit a, chloroplastic (Guizotia abyssinica (Niger)).